A 704-amino-acid chain; its full sequence is Elongation factor G (704 aa).

A tr-type G domain is found at 8–291; it reads DKVRNIGIMA…AVVEYLASPV (284 aa). Residues 17-24, 90-94, and 144-147 contribute to the GTP site; these read AHIDAGKT, DTPGH, and NKMD.

This sequence belongs to the TRAFAC class translation factor GTPase superfamily. Classic translation factor GTPase family. EF-G/EF-2 subfamily.

It is found in the cytoplasm. Functionally, catalyzes the GTP-dependent ribosomal translocation step during translation elongation. During this step, the ribosome changes from the pre-translocational (PRE) to the post-translocational (POST) state as the newly formed A-site-bound peptidyl-tRNA and P-site-bound deacylated tRNA move to the P and E sites, respectively. Catalyzes the coordinated movement of the two tRNA molecules, the mRNA and conformational changes in the ribosome. The polypeptide is Elongation factor G (Pelodictyon phaeoclathratiforme (strain DSM 5477 / BU-1)).